The following is a 48-amino-acid chain: U-actitoxin-Cgg3 (48 aa).

Intrachain disulfides connect cysteine 5–cysteine 41, cysteine 7–cysteine 33, and cysteine 23–cysteine 42. Serine 46 is subject to Serine amide. A propeptide spans 47 to 48 (GR) (removed in mature form).

Belongs to the sea anemone type 3 (BDS) potassium channel toxin family.

It is found in the secreted. Neurotoxin that induces paralysis when injected into crabs. May function in antimicrobial activity as it displays inhibitory activity towards the B.licheniformis enzyme subtilisin A (SUBTA) and the recombinant S.maltophilia protease 1 (rStmPr1) enzyme. Also displays inhibitory activity against various proteases including the porcine pancreatic elastase (PPE) and proteinase K (PK). The sequence is that of U-actitoxin-Cgg3 from Condylactis gigantea (Giant Caribbean anemone).